A 391-amino-acid polypeptide reads, in one-letter code: 8-amino-7-oxononanoate synthase (391 aa).

Position 19 (Arg-19) interacts with substrate. Position 106-107 (106-107) interacts with pyridoxal 5'-phosphate; the sequence is GY. Residue His-131 coordinates substrate. Ser-178, His-206, and Thr-234 together coordinate pyridoxal 5'-phosphate. N6-(pyridoxal phosphate)lysine is present on Lys-237. Thr-353 lines the substrate pocket.

This sequence belongs to the class-II pyridoxal-phosphate-dependent aminotransferase family. BioF subfamily. As to quaternary structure, homodimer. Requires pyridoxal 5'-phosphate as cofactor.

It carries out the reaction 6-carboxyhexanoyl-[ACP] + L-alanine + H(+) = (8S)-8-amino-7-oxononanoate + holo-[ACP] + CO2. The protein operates within cofactor biosynthesis; biotin biosynthesis. Functionally, catalyzes the decarboxylative condensation of pimeloyl-[acyl-carrier protein] and L-alanine to produce 8-amino-7-oxononanoate (AON), [acyl-carrier protein], and carbon dioxide. The sequence is that of 8-amino-7-oxononanoate synthase from Pelobacter propionicus (strain DSM 2379 / NBRC 103807 / OttBd1).